A 614-amino-acid polypeptide reads, in one-letter code: Vitamin B12 transporter BtuB (614 aa).

An N-terminal signal peptide occupies residues 1–20; that stretch reads MIKKASLLTACSVTAFSAWA. The TonB box signature appears at 26 to 33; sequence DTLVVTAN. A TBDR plug domain is found at 38 to 152; that stretch reads PRSTVLAPTT…IGGVVNIITT (115 aa). Cyanocob(III)alamin contacts are provided by residues L83, S85, N92, and 110 to 111; that span reads VS. The TBDR beta-barrel domain maps to 155–614; that stretch reads HPGTEISAGW…EYTLXGSYTF (460 aa). 3 consecutive transmembrane segments (beta stranded) span residues 158-165, 169-178, and 184-195; these read TEISAGWG, YQNYDVSTQQ, and TRVTLLGDYAHT. Positions 199, 211, 213, and 215 each coordinate Ca(2+). 2 beta stranded membrane-spanning segments follow: residues 217-227 and 232-248; these read FLSKTLYGALE and DAWS…NRTN. Residues Y249 and D250 each contribute to the Ca(2+) site. A251 serves as a coordination point for cyanocob(III)alamin. D261 serves as a coordination point for Ca(2+). 14 consecutive transmembrane segments (beta stranded) span residues 263 to 277, 279 to 296, 309 to 325, 328 to 337, 353 to 369, 371 to 381, 385 to 400, 403 to 417, 434 to 443, 449 to 458, 473 to 490, 494 to 509, 517 to 529, and 535 to 550; these read RKLY…LRYN, ELIK…KDYN, TLDE…NNII, HGNIGAGVDW, YDQR…QQVG, FTFEGAGRSDD, FGRH…WEFI, YRFI…KAPN, KSKQWEGAFE, VNWRISGYRN, YYNE…TANF, PLTH…ARNA, RRAK…QLDW, and DWGI…YDKD. Position 309 (T309) interacts with cyanocob(III)alamin. R517 serves as a coordination point for cyanocob(III)alamin. Y551 contributes to the cyanocob(III)alamin binding site. Beta stranded transmembrane passes span 558–572, 585–596, and 602–614; these read TVKM…LAVA, IANLFDKDYETV, and AGRE…SYTF. Positions 597-614 match the TonB C-terminal box motif; it reads YGYQTAGREYTLXGSYTF.

It belongs to the TonB-dependent receptor family. BtuB (TC 1.B.14.3.1) subfamily.

It is found in the cell outer membrane. Involved in the active translocation of vitamin B12 (cyanocobalamin) across the outer membrane to the periplasmic space. It derives its energy for transport by interacting with the trans-periplasmic membrane protein TonB. The polypeptide is Vitamin B12 transporter BtuB (Escherichia coli O6:H1 (strain CFT073 / ATCC 700928 / UPEC)).